Here is a 541-residue protein sequence, read N- to C-terminus: Man(5)GlcNAc(2)-PP-dolichol translocation protein RFT1 (541 aa).

The next 11 helical transmembrane spans lie at 16–36, 45–62, 85–105, 123–143, 154–176, 187–207, 335–355, 376–396, 414–434, 470–490, and 499–519; these read SGLL…AFIL, GIVN…TFLA, LLWL…WVWL, VLFF…WVLA, LAES…WLPH, LLYT…LLRS, LALL…QLAL, CLYV…FAAM, SFLV…FIMA, VLLG…AFLC, and LAHI…AFLT.

This sequence belongs to the RFT1 family.

It is found in the endoplasmic reticulum membrane. The protein operates within protein modification; protein glycosylation. Functionally, intramembrane glycolipid transporter that operates in the biosynthetic pathway of dolichol-linked oligosaccharides, the glycan precursors employed in protein asparagine (N)-glycosylation. The sequential addition of sugars to dolichol pyrophosphate produces dolichol-linked oligosaccharides containing fourteen sugars, including two GlcNAcs, nine mannoses and three glucoses. Once assembled, the oligosaccharide is transferred from the lipid to nascent proteins by oligosaccharyltransferases. The assembly of dolichol-linked oligosaccharides begins on the cytosolic side of the endoplasmic reticulum membrane and finishes in its lumen. RFT1 could mediate the translocation of the cytosolically oriented intermediate DolPP-GlcNAc2Man5, produced by ALG11, into the ER lumen where dolichol-linked oligosaccharides assembly continues. However, the intramembrane lipid transporter activity could not be confirmed in vitro. In Mus musculus (Mouse), this protein is Man(5)GlcNAc(2)-PP-dolichol translocation protein RFT1.